Reading from the N-terminus, the 506-residue chain is Parthenolide synthase (506 aa).

Residues 10–30 (LFLPTLCTILISYIIIKYVLI) traverse the membrane as a helical segment. N-linked (GlcNAc...) asparagine glycans are attached at residues asparagine 32, asparagine 63, asparagine 121, asparagine 168, and asparagine 175. A helical membrane pass occupies residues 301–321 (LLLNVLLGAIDTTFTTIVWAM). Cysteine 448 serves as a coordination point for heme.

This sequence belongs to the cytochrome P450 family.

It localises to the membrane. The enzyme catalyses (+)-costunolide + reduced [NADPH--hemoprotein reductase] + O2 = parthenolide + oxidized [NADPH--hemoprotein reductase] + H2O + H(+). Its pathway is secondary metabolite biosynthesis; terpenoid biosynthesis. In terms of biological role, involved in the biosynthesis of germacrene-derived sesquiterpene lactones. Component of the parthenolide biosynthetic pathway; parthenolide and conjugates are promising anti-cancer drugs highly active against colon cancer cells. Catalyzes the conversion of costunolide to parthenolide. The protein is Parthenolide synthase of Tanacetum parthenium (Feverfew).